The sequence spans 188 residues: Ribosomal RNA small subunit methyltransferase G (188 aa).

S-adenosyl-L-methionine is bound by residues Gly69, Phe74, 119–120 (VQ), and Arg134.

This sequence belongs to the methyltransferase superfamily. RNA methyltransferase RsmG family.

It is found in the cytoplasm. It carries out the reaction guanosine(527) in 16S rRNA + S-adenosyl-L-methionine = N(7)-methylguanosine(527) in 16S rRNA + S-adenosyl-L-homocysteine. Specifically methylates the N7 position of guanine in position 527 of 16S rRNA. This Campylobacter jejuni subsp. jejuni serotype O:2 (strain ATCC 700819 / NCTC 11168) protein is Ribosomal RNA small subunit methyltransferase G.